We begin with the raw amino-acid sequence, 61 residues long: Bacteriocin sakacin-P (61 aa).

A propeptide spanning residues 1 to 18 (MEKFIELSLKEVTAITGG) is cleaved from the precursor. A disulfide bridge links C27 with C32.

The protein belongs to the bacteriocin class IIA/YGNGV family.

The protein resides in the secreted. Its function is as follows. Bactericidal activity; inhibits closely related Lactobacilli, Listeria monocytogenes and ivanovvi, Enterococcus faecalis, Carnobacterium sp and Brocothrix thermosphacta. This chain is Bacteriocin sakacin-P (sakP), found in Latilactobacillus sakei (Lactobacillus sakei).